Consider the following 259-residue polypeptide: UPF0246 protein NGO_0461 (259 aa).

It belongs to the UPF0246 family.

In Neisseria gonorrhoeae (strain ATCC 700825 / FA 1090), this protein is UPF0246 protein NGO_0461.